A 697-amino-acid polypeptide reads, in one-letter code: General transcription factor IIH subunit 1 (697 aa).

Residues 115–136 show a composition bias toward low complexity; the sequence is LPVSASNGSNTTSPTNGTSPIN. Disordered regions lie at residues 115–141 and 228–250; these read LPVSASNGSNTTSPTNGTSPINGTSPT and KNDSTRSEKQHTGMPSNLLADVR. BSD domains are found at residues 174–231 and 255–307; these read LSKL…KNDS and TPNA…YFYR. Residues 412 to 422 are compositionally biased toward basic and acidic residues; the sequence is KNLKKTKKDEN. The interval 412 to 462 is disordered; sequence KNLKKTKKDENSTSTPTTTTTTTNTTNTTNTTTTTTTNNTTIKDPNLYNGD. Residues 423–452 show a composition bias toward low complexity; sequence STSTPTTTTTTTNTTNTTNTTTTTTTNNTT.

Belongs to the TFB1 family. As to quaternary structure, component of the 7-subunit TFIIH core complex composed of XPB/repB, XPD/repD, gtf2h1, gtf2h2, gtf2h3, gtf2h4 and gtf2h5, which is active in NER. The core complex associates with the 3-subunit CDK-activating kinase (CAK) module composed of cycH/cyclin H, cdk7 and mnat1 to form the 10-subunit holoenzyme (holo-TFIIH) active in transcription.

The protein resides in the nucleus. Component of the general transcription and DNA repair factor IIH (TFIIH) core complex, which is involved in general and transcription-coupled nucleotide excision repair (NER) of damaged DNA and, when complexed to CAK, in RNA transcription by RNA polymerase II. In NER, TFIIH acts by opening DNA around the lesion to allow the excision of the damaged oligonucleotide and its replacement by a new DNA fragment. In transcription, TFIIH has an essential role in transcription initiation. When the pre-initiation complex (PIC) has been established, TFIIH is required for promoter opening and promoter escape. Phosphorylation of the C-terminal tail (CTD) of the largest subunit of RNA polymerase II by the kinase module CAK controls the initiation of transcription. The sequence is that of General transcription factor IIH subunit 1 (gtf2h1) from Dictyostelium discoideum (Social amoeba).